The chain runs to 852 residues: Elongation factor 2 (852 aa).

The 340-residue stretch at 17–356 folds into the tr-type G domain; the sequence is RNIRNMSVIA…MIAFHLPSPV (340 aa). 26–33 is a binding site for GTP; the sequence is AHVDHGKS. Threonine 57 and threonine 59 each carry phosphothreonine. GTP-binding positions include 170–173 and 227–229; these read NKMD and SGL. Position 709 is a diphthamide (histidine 709).

Belongs to the TRAFAC class translation factor GTPase superfamily. Classic translation factor GTPase family. EF-G/EF-2 subfamily. Post-translationally, phosphorylation by EF-2 kinase completely inactivates EF-2. In terms of processing, AMPylated by fic-1.

The protein resides in the cytoplasm. It catalyses the reaction GTP + H2O = GDP + phosphate + H(+). Functionally, catalyzes the GTP-dependent ribosomal translocation step during translation elongation. During this step, the ribosome changes from the pre-translocational (PRE) to the post-translocational (POST) state as the newly formed A-site-bound peptidyl-tRNA and P-site-bound deacylated tRNA move to the P and E sites, respectively. Catalyzes the coordinated movement of the two tRNA molecules, the mRNA and conformational changes in the ribosome. Involved in the morphogenesis of epidermal tissues. The protein is Elongation factor 2 (eef-2) of Caenorhabditis elegans.